A 409-amino-acid chain; its full sequence is MAASVCRPYVRSLPGVMPWRSSSCHYEYTAMHHFLGSFQKLPFEPFNTGARKIHTAPVRSLFLLRPVPILLATGGGYAGYRQYEKYRDQKLEKLGLEIPPKLASHWEVALYKSVPTRLLSRAWGRLNQVELPYWLRRPVYSLYIWTFGVNMTEAAVEDLHHYRNLSEFFRRKLKPQARPVCGLHSVISPSDGKILTFGQVKNCEVEQVKGVTYSLESFLGPRTYTEDLSFPPASSRDSFRNQLVTREGNELYHCVIYLAPGDYHCFHSPTDWTVSHRRHFPGSLMSVNPGMARWIKELFCHNERVVLSGDWKHGFFSLTAVGATNVGSIRIYFDQDLHTNSPRYSKGSYNDLSFVTHANKEGIPMRKGEHLGEFNLGSTIVLIFEAPKDFNFRLKAGQKIRFGEALGSL.

The N-terminal 52 residues, 1–52 (MAASVCRPYVRSLPGVMPWRSSSCHYEYTAMHHFLGSFQKLPFEPFNTGARK), are a transit peptide targeting the mitochondrion. Residues 53–63 (IHTAPVRSLFL) lie on the Mitochondrial matrix side of the membrane. The chain crosses the membrane as a helical span at residues 64 to 82 (LRPVPILLATGGGYAGYRQ). Residues 83-409 (YEKYRDQKLE…IRFGEALGSL (327 aa)) lie on the Mitochondrial intermembrane side of the membrane. Catalysis depends on charge relay system; for autoendoproteolytic cleavage activity residues D191, H267, and S378. S378 (schiff-base intermediate with substrate; via pyruvic acid; for decarboxylase activity) is an active-site residue. S378 bears the Pyruvic acid (Ser); by autocatalysis mark.

Belongs to the phosphatidylserine decarboxylase family. PSD-B subfamily. Eukaryotic type I sub-subfamily. In terms of assembly, heterodimer of a large membrane-associated beta subunit and a small pyruvoyl-containing alpha subunit. The cofactor is pyruvate. Is synthesized initially as an inactive proenzyme. Formation of the active enzyme involves a self-maturation process in which the active site pyruvoyl group is generated from an internal serine residue via an autocatalytic post-translational modification. Two non-identical subunits are generated from the proenzyme in this reaction, and the pyruvate is formed at the N-terminus of the alpha chain, which is derived from the carboxyl end of the proenzyme. The autoendoproteolytic cleavage occurs by a canonical serine protease mechanism, in which the side chain hydroxyl group of the serine supplies its oxygen atom to form the C-terminus of the beta chain, while the remainder of the serine residue undergoes an oxidative deamination to produce ammonia and the pyruvoyl prosthetic group on the alpha chain. During this reaction, the Ser that is part of the protease active site of the proenzyme becomes the pyruvoyl prosthetic group, which constitutes an essential element of the active site of the mature decarboxylase.

It localises to the mitochondrion inner membrane. The protein resides in the cytoplasm. Its subcellular location is the lipid droplet. It carries out the reaction a 1,2-diacyl-sn-glycero-3-phospho-L-serine + H(+) = a 1,2-diacyl-sn-glycero-3-phosphoethanolamine + CO2. It participates in phospholipid metabolism; phosphatidylethanolamine biosynthesis. Catalyzes the formation of phosphatidylethanolamine (PtdEtn) from phosphatidylserine (PtdSer). Plays a central role in phospholipid metabolism and in the interorganelle trafficking of phosphatidylserine. May be involved in lipid droplet biogenesis at the endoplasmic reticulum membrane. This Cricetulus griseus (Chinese hamster) protein is Phosphatidylserine decarboxylase proenzyme, mitochondrial.